Reading from the N-terminus, the 226-residue chain is uncharacterized protein (226 aa).

Residues Phe203–Leu225 form a helical membrane-spanning segment.

The protein localises to the membrane. This is an uncharacterized protein from Acanthamoeba polyphaga (Amoeba).